Consider the following 169-residue polypeptide: Large ribosomal subunit protein uL10 (169 aa).

This sequence belongs to the universal ribosomal protein uL10 family. Part of the ribosomal stalk of the 50S ribosomal subunit. The N-terminus interacts with L11 and the large rRNA to form the base of the stalk. The C-terminus forms an elongated spine to which L12 dimers bind in a sequential fashion forming a multimeric L10(L12)X complex.

Its function is as follows. Forms part of the ribosomal stalk, playing a central role in the interaction of the ribosome with GTP-bound translation factors. In Orientia tsutsugamushi (strain Boryong) (Rickettsia tsutsugamushi), this protein is Large ribosomal subunit protein uL10.